The chain runs to 298 residues: 4-hydroxy-tetrahydrodipicolinate synthase (298 aa).

Position 48 (threonine 48) interacts with pyruvate. Tyrosine 137 functions as the Proton donor/acceptor in the catalytic mechanism. The active-site Schiff-base intermediate with substrate is lysine 166. Position 207 (isoleucine 207) interacts with pyruvate.

This sequence belongs to the DapA family. In terms of assembly, homotetramer; dimer of dimers.

It is found in the cytoplasm. The catalysed reaction is L-aspartate 4-semialdehyde + pyruvate = (2S,4S)-4-hydroxy-2,3,4,5-tetrahydrodipicolinate + H2O + H(+). It functions in the pathway amino-acid biosynthesis; L-lysine biosynthesis via DAP pathway; (S)-tetrahydrodipicolinate from L-aspartate: step 3/4. Its function is as follows. Catalyzes the condensation of (S)-aspartate-beta-semialdehyde [(S)-ASA] and pyruvate to 4-hydroxy-tetrahydrodipicolinate (HTPA). In Campylobacter jejuni subsp. jejuni serotype O:2 (strain ATCC 700819 / NCTC 11168), this protein is 4-hydroxy-tetrahydrodipicolinate synthase.